An 899-amino-acid chain; its full sequence is DNA mismatch repair protein MutS (899 aa).

Residues 1–20 (MGLQKKTDPEQAQADSAASR) are disordered. Residue 631-638 (GPNMGGKS) coordinates ATP. A disordered region spans residues 832–852 (PPTPDDDEDDFGAAPSAVPAP). The segment covering 843 to 852 (GAAPSAVPAP) has biased composition (low complexity).

This sequence belongs to the DNA mismatch repair MutS family.

This protein is involved in the repair of mismatches in DNA. It is possible that it carries out the mismatch recognition step. This protein has a weak ATPase activity. The protein is DNA mismatch repair protein MutS of Cupriavidus necator (strain ATCC 17699 / DSM 428 / KCTC 22496 / NCIMB 10442 / H16 / Stanier 337) (Ralstonia eutropha).